The primary structure comprises 331 residues: Ferrochelatase (331 aa).

Fe cation contacts are provided by His-187 and Glu-286.

Belongs to the ferrochelatase family.

It is found in the cytoplasm. The catalysed reaction is heme b + 2 H(+) = protoporphyrin IX + Fe(2+). It functions in the pathway porphyrin-containing compound metabolism; protoheme biosynthesis; protoheme from protoporphyrin-IX: step 1/1. In terms of biological role, catalyzes the ferrous insertion into protoporphyrin IX. The polypeptide is Ferrochelatase (Legionella pneumophila (strain Lens)).